Consider the following 1217-residue polypeptide: ATP-dependent helicase/nuclease subunit A (1217 aa).

In terms of domain architecture, UvrD-like helicase ATP-binding spans 10-475 (VIWTDAQWQS…IDLSQNFRSR (466 aa)). 31-38 (AAAGSGKT) is an ATP binding site. Residues 476–786 (KEVLSTTNYI…RMMTIHSSKG (311 aa)) form the UvrD-like helicase C-terminal domain.

The protein belongs to the helicase family. AddA subfamily. As to quaternary structure, heterodimer of AddA and AddB/RexB. It depends on Mg(2+) as a cofactor.

The catalysed reaction is Couples ATP hydrolysis with the unwinding of duplex DNA by translocating in the 3'-5' direction.. It catalyses the reaction ATP + H2O = ADP + phosphate + H(+). Functionally, the heterodimer acts as both an ATP-dependent DNA helicase and an ATP-dependent, dual-direction single-stranded exonuclease. Recognizes the chi site generating a DNA molecule suitable for the initiation of homologous recombination. The AddA nuclease domain is required for chi fragment generation; this subunit has the helicase and 3' -&gt; 5' nuclease activities. This Staphylococcus aureus (strain Mu3 / ATCC 700698) protein is ATP-dependent helicase/nuclease subunit A.